The chain runs to 82 residues: Cytochrome b559 subunit alpha (82 aa).

Residues 22 to 36 traverse the membrane as a helical segment; the sequence is IIHAVTLPAIFIAGF. His-24 provides a ligand contact to heme.

Belongs to the PsbE/PsbF family. In terms of assembly, heterodimer of an alpha subunit and a beta subunit. PSII is composed of 1 copy each of membrane proteins PsbA, PsbB, PsbC, PsbD, PsbE, PsbF, PsbH, PsbI, PsbJ, PsbK, PsbL, PsbM, PsbT, PsbX, PsbY, Psb30/Ycf12, peripheral proteins PsbO, CyanoQ (PsbQ), PsbU, PsbV and a large number of cofactors. It forms dimeric complexes. Requires heme b as cofactor.

The protein resides in the cellular thylakoid membrane. In terms of biological role, this b-type cytochrome is tightly associated with the reaction center of photosystem II (PSII). PSII is a light-driven water:plastoquinone oxidoreductase that uses light energy to abstract electrons from H(2)O, generating O(2) and a proton gradient subsequently used for ATP formation. It consists of a core antenna complex that captures photons, and an electron transfer chain that converts photonic excitation into a charge separation. The chain is Cytochrome b559 subunit alpha from Prochlorococcus marinus (strain MIT 9515).